Consider the following 256-residue polypeptide: 5-keto-4-deoxy-D-glucarate aldolase (256 aa).

The Proton acceptor role is filled by histidine 50. Glutamine 151 serves as a coordination point for substrate. Glutamate 153 contacts Mg(2+). Positions 178 and 179 each coordinate substrate. Aspartate 179 provides a ligand contact to Mg(2+).

It belongs to the HpcH/HpaI aldolase family. KDGluc aldolase subfamily. Homohexamer; trimer of dimers. The cofactor is Mg(2+).

The enzyme catalyses 5-dehydro-4-deoxy-D-glucarate = 2-hydroxy-3-oxopropanoate + pyruvate. It carries out the reaction 2-dehydro-3-deoxy-D-glucarate = 2-hydroxy-3-oxopropanoate + pyruvate. It functions in the pathway carbohydrate acid metabolism; galactarate degradation; D-glycerate from galactarate: step 2/3. In terms of biological role, catalyzes the reversible retro-aldol cleavage of both 5-keto-4-deoxy-D-glucarate and 2-keto-3-deoxy-D-glucarate to pyruvate and tartronic semialdehyde. This chain is 5-keto-4-deoxy-D-glucarate aldolase, found in Escherichia fergusonii (strain ATCC 35469 / DSM 13698 / CCUG 18766 / IAM 14443 / JCM 21226 / LMG 7866 / NBRC 102419 / NCTC 12128 / CDC 0568-73).